Consider the following 553-residue polypeptide: Probable malate:quinone oxidoreductase (553 aa).

The segment at 524–553 is disordered; sequence PPPKIDLGAPSQATGNAPARPAKASADMAL.

It belongs to the MQO family. It depends on FAD as a cofactor.

The enzyme catalyses (S)-malate + a quinone = a quinol + oxaloacetate. It participates in carbohydrate metabolism; tricarboxylic acid cycle; oxaloacetate from (S)-malate (quinone route): step 1/1. The polypeptide is Probable malate:quinone oxidoreductase (Burkholderia cenocepacia (strain HI2424)).